A 299-amino-acid chain; its full sequence is ATP phosphoribosyltransferase (299 aa).

The protein belongs to the ATP phosphoribosyltransferase family. Long subfamily. As to quaternary structure, equilibrium between an active dimeric form, an inactive hexameric form and higher aggregates. Interconversion between the various forms is largely reversible and is influenced by the natural substrates and inhibitors of the enzyme. The cofactor is Mg(2+).

The protein resides in the cytoplasm. The enzyme catalyses 1-(5-phospho-beta-D-ribosyl)-ATP + diphosphate = 5-phospho-alpha-D-ribose 1-diphosphate + ATP. It participates in amino-acid biosynthesis; L-histidine biosynthesis; L-histidine from 5-phospho-alpha-D-ribose 1-diphosphate: step 1/9. With respect to regulation, feedback inhibited by histidine. Catalyzes the condensation of ATP and 5-phosphoribose 1-diphosphate to form N'-(5'-phosphoribosyl)-ATP (PR-ATP). Has a crucial role in the pathway because the rate of histidine biosynthesis seems to be controlled primarily by regulation of HisG enzymatic activity. This Sodalis glossinidius (strain morsitans) protein is ATP phosphoribosyltransferase.